A 63-amino-acid polypeptide reads, in one-letter code: Large ribosomal subunit protein uL30 (63 aa).

This sequence belongs to the universal ribosomal protein uL30 family. In terms of assembly, part of the 50S ribosomal subunit.

This chain is Large ribosomal subunit protein uL30, found in Chlorobium chlorochromatii (strain CaD3).